The following is a 529-amino-acid chain: Probable DNA helicase MPN_340 (529 aa).

The region spanning 2-285 (EHLNQEQKAA…FYTTQNYRSI (284 aa)) is the UvrD-like helicase ATP-binding domain. An ATP-binding site is contributed by 23 to 30 (SGAGTGKT).

Belongs to the helicase family. UvrD subfamily.

The enzyme catalyses Couples ATP hydrolysis with the unwinding of duplex DNA by translocating in the 3'-5' direction.. It carries out the reaction ATP + H2O = ADP + phosphate + H(+). The sequence is that of Probable DNA helicase MPN_340 from Mycoplasma pneumoniae (strain ATCC 29342 / M129 / Subtype 1) (Mycoplasmoides pneumoniae).